The following is a 657-amino-acid chain: UvrABC system protein B (657 aa).

In terms of domain architecture, Helicase ATP-binding spans 25 to 163 (ASIKNGNKYQ…QGMVLFLEIN (139 aa)). 38–45 (GVTGSGKT) provides a ligand contact to ATP. The short motif at 91-114 (YYDYYQPEAYIPRQDLFIEKDSSI) is the Beta-hairpin element. The short motif at 130–133 (LSFD) is the DEAD box element. The Helicase C-terminal domain maps to 433–599 (QVEILYDMAK…SVSRNVEESL (167 aa)). Residues 622–657 (AKIVKDLRKQMMEAADKLEFEKAAALRDEIKKMRKL) enclose the UVR domain.

Belongs to the UvrB family. As to quaternary structure, forms a heterotetramer with UvrA during the search for lesions. Interacts with UvrC in an incision complex.

The protein resides in the cytoplasm. In terms of biological role, the UvrABC repair system catalyzes the recognition and processing of DNA lesions. A damage recognition complex composed of 2 UvrA and 2 UvrB subunits scans DNA for abnormalities. Upon binding of the UvrA(2)B(2) complex to a putative damaged site, the DNA wraps around one UvrB monomer. DNA wrap is dependent on ATP binding by UvrB and probably causes local melting of the DNA helix, facilitating insertion of UvrB beta-hairpin between the DNA strands. Then UvrB probes one DNA strand for the presence of a lesion. If a lesion is found the UvrA subunits dissociate and the UvrB-DNA preincision complex is formed. This complex is subsequently bound by UvrC and the second UvrB is released. If no lesion is found, the DNA wraps around the other UvrB subunit that will check the other stand for damage. This is UvrABC system protein B from Campylobacter hominis (strain ATCC BAA-381 / DSM 21671 / CCUG 45161 / LMG 19568 / NCTC 13146 / CH001A).